The chain runs to 347 residues: Probable RNA methyltransferase Lcho_2507 (347 aa).

Residue Glu-89 is the Proton acceptor of the active site. Positions 92-318 (LLPRDGLCVS…TKLRQSAGQD (227 aa)) constitute a Radical SAM core domain. The cysteines at positions 99 and 323 are disulfide-linked. Residues Cys-106, Cys-110, and Cys-113 each coordinate [4Fe-4S] cluster. S-adenosyl-L-methionine contacts are provided by residues 151–152 (GE), Ser-181, 204–206 (SLH), and Asn-280. Cys-323 (S-methylcysteine intermediate) is an active-site residue.

The protein belongs to the radical SAM superfamily. RlmN family. Requires [4Fe-4S] cluster as cofactor.

It localises to the cytoplasm. The protein is Probable RNA methyltransferase Lcho_2507 of Leptothrix cholodnii (strain ATCC 51168 / LMG 8142 / SP-6) (Leptothrix discophora (strain SP-6)).